A 472-amino-acid polypeptide reads, in one-letter code: 2-methylcitrate synthase, mitochondrial (472 aa).

Residues 1–29 (MALNLTTSRRALGSLKPLTRAAFVGARGY) constitute a mitochondrion transit peptide. Residues arginine 75 and lysine 193 each contribute to the CoA site. Histidine 271 serves as a coordination point for oxaloacetate. Leucine 306 is a CoA binding site. Histidine 307 is an active-site residue. CoA is bound by residues valine 348, glycine 350, and tyrosine 351. Residues histidine 353 and arginine 362 each coordinate oxaloacetate. The active site involves histidine 353. Positions 402, 403, and 408 each coordinate CoA. Aspartate 410 is a catalytic residue. Oxaloacetate-binding residues include arginine 436 and arginine 456.

Belongs to the citrate synthase family. As to quaternary structure, homodimer.

The protein resides in the mitochondrion matrix. The enzyme catalyses propanoyl-CoA + oxaloacetate + H2O = (2S,3S)-2-methylcitrate + CoA + H(+). The catalysed reaction is oxaloacetate + acetyl-CoA + H2O = citrate + CoA + H(+). Its pathway is organic acid metabolism; propanoate degradation. In terms of biological role, component of the methylcitrate cycle that catalyzes the synthesis of (2S,3S)-2-methylcitrate from propionyl-CoA and oxaloacetate. Plays an important role in detoxification of propionyl-CoA, an inhibitor of both primary and secondary metabolism. Also has citrate synthase activity using as substrates acetyl-CoA and oxaloacetate. The chain is 2-methylcitrate synthase, mitochondrial from Fusarium solani (Filamentous fungus).